Consider the following 292-residue polypeptide: Coiled-coil domain-containing protein 192 (292 aa).

Residues 28–55 (SVVPESDTSERSSMTSGSSESDIPQENK) are disordered. Residues 38–49 (RSSMTSGSSESD) are compositionally biased toward low complexity. Coiled-coil stretches lie at residues 65-174 (QMAF…LATA) and 222-258 (IMEL…AERS). The segment covering 251–267 (QQLEAERSPHPPQEVKD) has biased composition (basic and acidic residues). Residues 251 to 292 (QQLEAERSPHPPQEVKDPPGCLPEAPVFSTHDIPPVVSDENL) are disordered.

In Homo sapiens (Human), this protein is Coiled-coil domain-containing protein 192.